The following is a 345-amino-acid chain: N-acetyl-gamma-glutamyl-phosphate reductase (345 aa).

The active site involves Cys-149.

This sequence belongs to the NAGSA dehydrogenase family. Type 1 subfamily.

The protein localises to the cytoplasm. The enzyme catalyses N-acetyl-L-glutamate 5-semialdehyde + phosphate + NADP(+) = N-acetyl-L-glutamyl 5-phosphate + NADPH + H(+). It functions in the pathway amino-acid biosynthesis; L-arginine biosynthesis; N(2)-acetyl-L-ornithine from L-glutamate: step 3/4. Its function is as follows. Catalyzes the NADPH-dependent reduction of N-acetyl-5-glutamyl phosphate to yield N-acetyl-L-glutamate 5-semialdehyde. In Bacillus cereus (strain ATCC 10987 / NRS 248), this protein is N-acetyl-gamma-glutamyl-phosphate reductase.